Reading from the N-terminus, the 369-residue chain is Probable dual-specificity RNA methyltransferase RlmN (369 aa).

The active-site Proton acceptor is the glutamate 108. The 238-residue stretch at 114–351 (YPDRATLCIS…IAQGVSCTVR (238 aa)) folds into the Radical SAM core domain. Cysteine 121 and cysteine 362 are disulfide-bonded. [4Fe-4S] cluster is bound by residues cysteine 128, cysteine 132, and cysteine 135. Residues 183–184 (GE), serine 217, 240–242 (SLH), and asparagine 319 each bind S-adenosyl-L-methionine. The active-site S-methylcysteine intermediate is cysteine 362.

This sequence belongs to the radical SAM superfamily. RlmN family. [4Fe-4S] cluster is required as a cofactor.

The protein localises to the cytoplasm. It catalyses the reaction adenosine(2503) in 23S rRNA + 2 reduced [2Fe-2S]-[ferredoxin] + 2 S-adenosyl-L-methionine = 2-methyladenosine(2503) in 23S rRNA + 5'-deoxyadenosine + L-methionine + 2 oxidized [2Fe-2S]-[ferredoxin] + S-adenosyl-L-homocysteine. The enzyme catalyses adenosine(37) in tRNA + 2 reduced [2Fe-2S]-[ferredoxin] + 2 S-adenosyl-L-methionine = 2-methyladenosine(37) in tRNA + 5'-deoxyadenosine + L-methionine + 2 oxidized [2Fe-2S]-[ferredoxin] + S-adenosyl-L-homocysteine. In terms of biological role, specifically methylates position 2 of adenine 2503 in 23S rRNA and position 2 of adenine 37 in tRNAs. The protein is Probable dual-specificity RNA methyltransferase RlmN of Rhodococcus erythropolis (strain PR4 / NBRC 100887).